The chain runs to 401 residues: Formate-dependent phosphoribosylglycinamide formyltransferase (401 aa).

N(1)-(5-phospho-beta-D-ribosyl)glycinamide contacts are provided by residues 22 to 23 (EL) and Glu82. ATP contacts are provided by residues Arg115, Lys157, 162–167 (SSGKGQ), 197–200 (EGFI), and Glu205. Residues 120–315 (RLAAESLGLP…EFELHARAIL (196 aa)) enclose the ATP-grasp domain. 2 residues coordinate Mg(2+): Glu274 and Glu286. Residues Asp293, Lys362, and 369-370 (RR) each bind N(1)-(5-phospho-beta-D-ribosyl)glycinamide.

It belongs to the PurK/PurT family. In terms of assembly, homodimer.

The enzyme catalyses N(1)-(5-phospho-beta-D-ribosyl)glycinamide + formate + ATP = N(2)-formyl-N(1)-(5-phospho-beta-D-ribosyl)glycinamide + ADP + phosphate + H(+). It functions in the pathway purine metabolism; IMP biosynthesis via de novo pathway; N(2)-formyl-N(1)-(5-phospho-D-ribosyl)glycinamide from N(1)-(5-phospho-D-ribosyl)glycinamide (formate route): step 1/1. Involved in the de novo purine biosynthesis. Catalyzes the transfer of formate to 5-phospho-ribosyl-glycinamide (GAR), producing 5-phospho-ribosyl-N-formylglycinamide (FGAR). Formate is provided by PurU via hydrolysis of 10-formyl-tetrahydrofolate. In Cupriavidus necator (strain ATCC 17699 / DSM 428 / KCTC 22496 / NCIMB 10442 / H16 / Stanier 337) (Ralstonia eutropha), this protein is Formate-dependent phosphoribosylglycinamide formyltransferase.